The primary structure comprises 391 residues: Na(+)/H(+) antiporter NhaA (391 aa).

The next 12 helical transmembrane spans lie at 9-29 (FQLE…ALII), 36-56 (YLYS…LNIA), 59-79 (LLLW…GLEV), 95-115 (ILPA…YWFI), 123-143 (VAGW…VLAL), 154-174 (LFLM…IALF), 177-197 (GTLS…LIAM), 213-235 (LILW…ALAL), 259-279 (WVAY…SLAG), 293-313 (IAVG…WLAV), 329-349 (ILGV…VGSL), and 364-384 (MGIL…TAMA).

Belongs to the NhaA Na(+)/H(+) (TC 2.A.33) antiporter family.

It localises to the cell inner membrane. The enzyme catalyses Na(+)(in) + 2 H(+)(out) = Na(+)(out) + 2 H(+)(in). Its function is as follows. Na(+)/H(+) antiporter that extrudes sodium in exchange for external protons. This is Na(+)/H(+) antiporter NhaA from Pseudomonas putida (strain GB-1).